We begin with the raw amino-acid sequence, 200 residues long: Imidazoleglycerol-phosphate dehydratase (200 aa).

This sequence belongs to the imidazoleglycerol-phosphate dehydratase family.

Its subcellular location is the cytoplasm. It catalyses the reaction D-erythro-1-(imidazol-4-yl)glycerol 3-phosphate = 3-(imidazol-4-yl)-2-oxopropyl phosphate + H2O. It participates in amino-acid biosynthesis; L-histidine biosynthesis; L-histidine from 5-phospho-alpha-D-ribose 1-diphosphate: step 6/9. The chain is Imidazoleglycerol-phosphate dehydratase from Chlorobium limicola (strain DSM 245 / NBRC 103803 / 6330).